Reading from the N-terminus, the 348-residue chain is A-type ATP synthase subunit C (348 aa).

The protein belongs to the V-ATPase V0D/AC39 subunit family. In terms of assembly, has multiple subunits with at least A(3), B(3), C, D, E, F, H, I and proteolipid K(x).

It is found in the cell membrane. Component of the A-type ATP synthase that produces ATP from ADP in the presence of a proton gradient across the membrane. The chain is A-type ATP synthase subunit C from Haloferax volcanii (strain ATCC 29605 / DSM 3757 / JCM 8879 / NBRC 14742 / NCIMB 2012 / VKM B-1768 / DS2) (Halobacterium volcanii).